A 68-amino-acid polypeptide reads, in one-letter code: uncharacterized protein (68 aa).

Residues 24 to 44 traverse the membrane as a helical segment; it reads AHICKCIAMFFVVAGVVLMFF.

The protein resides in the endoplasmic reticulum. It is found in the membrane. This is an uncharacterized protein from Saccharomyces cerevisiae (strain ATCC 204508 / S288c) (Baker's yeast).